Reading from the N-terminus, the 236-residue chain is tRNA (guanine-N(7)-)-methyltransferase (236 aa).

Glutamate 68, glutamate 93, aspartate 120, and aspartate 143 together coordinate S-adenosyl-L-methionine. Aspartate 143 is a catalytic residue. Substrate-binding positions include lysine 147, aspartate 179, and 212–215 (TKFE).

This sequence belongs to the class I-like SAM-binding methyltransferase superfamily. TrmB family.

The catalysed reaction is guanosine(46) in tRNA + S-adenosyl-L-methionine = N(7)-methylguanosine(46) in tRNA + S-adenosyl-L-homocysteine. Its pathway is tRNA modification; N(7)-methylguanine-tRNA biosynthesis. Catalyzes the formation of N(7)-methylguanine at position 46 (m7G46) in tRNA. In Nitrosococcus oceani (strain ATCC 19707 / BCRC 17464 / JCM 30415 / NCIMB 11848 / C-107), this protein is tRNA (guanine-N(7)-)-methyltransferase.